The primary structure comprises 645 residues: Chaperone protein DnaK (645 aa).

Threonine 201 bears the Phosphothreonine; by autocatalysis mark. Positions 606-629 are enriched in low complexity; sequence NTNNATAGDNNTTDTGSSSNSDGS. Positions 606-645 are disordered; the sequence is NTNNATAGDNNTTDTGSSSNSDGSKVVDSDYQEIDKKDGK. Residues 630-645 show a composition bias toward basic and acidic residues; it reads KVVDSDYQEIDKKDGK.

The protein belongs to the heat shock protein 70 family.

Acts as a chaperone. The sequence is that of Chaperone protein DnaK from Ehrlichia ruminantium (strain Gardel).